The chain runs to 485 residues: Maturase K (485 aa).

This sequence belongs to the intron maturase 2 family. MatK subfamily.

It localises to the plastid. Its subcellular location is the chloroplast. Functionally, usually encoded in the trnK tRNA gene intron. Probably assists in splicing its own and other chloroplast group II introns. The sequence is that of Maturase K from Malus domestica (Apple).